The chain runs to 148 residues: Large ribosomal subunit protein bL9 (148 aa).

Belongs to the bacterial ribosomal protein bL9 family.

Binds to the 23S rRNA. The protein is Large ribosomal subunit protein bL9 of Bifidobacterium adolescentis (strain ATCC 15703 / DSM 20083 / NCTC 11814 / E194a).